Reading from the N-terminus, the 362-residue chain is Large ribosomal subunit protein uL4A (362 aa).

Position 2 is an N-acetylserine (serine 2). Omega-N-methylarginine is present on arginine 95. The interval 277 to 362 is C-terminal-extended nuclear localization signal; it reads PSHIISTSDV…AVFTETLKHD (86 aa).

Belongs to the universal ribosomal protein uL4 family. As to quaternary structure, component of the large ribosomal subunit (LSU). Mature yeast ribosomes consist of a small (40S) and a large (60S) subunit. The 40S small subunit contains 1 molecule of ribosomal RNA (18S rRNA) and 33 different proteins (encoded by 57 genes). The large 60S subunit contains 3 rRNA molecules (25S, 5.8S and 5S rRNA) and 46 different proteins (encoded by 81 genes). uL4 is associated with the polypeptide exit tunnel. uL4 interacts with its chaperone ACL4 and the nuclear import receptor KAP104. In terms of processing, N-terminally acetylated by acetyltransferase NatA.

It localises to the cytoplasm. Its subcellular location is the nucleus. Its function is as follows. Component of the ribosome, a large ribonucleoprotein complex responsible for the synthesis of proteins in the cell. The small ribosomal subunit (SSU) binds messenger RNAs (mRNAs) and translates the encoded message by selecting cognate aminoacyl-transfer RNA (tRNA) molecules. The large subunit (LSU) contains the ribosomal catalytic site termed the peptidyl transferase center (PTC), which catalyzes the formation of peptide bonds, thereby polymerizing the amino acids delivered by tRNAs into a polypeptide chain. The nascent polypeptides leave the ribosome through a tunnel in the LSU and interact with protein factors that function in enzymatic processing, targeting, and the membrane insertion of nascent chains at the exit of the ribosomal tunnel. uL4 participates in the regulation of the accumulation of its own mRNA. The chain is Large ribosomal subunit protein uL4A from Saccharomyces cerevisiae (strain ATCC 204508 / S288c) (Baker's yeast).